Reading from the N-terminus, the 237-residue chain is Aliphatic sulfonates import ATP-binding protein SsuB 1 (237 aa).

The 217-residue stretch at 5–221 (LMNIRVDRKA…PRDRRDPLLA (217 aa)) folds into the ABC transporter domain. Residue 38-45 (GPSGCGKS) participates in ATP binding.

It belongs to the ABC transporter superfamily. Aliphatic sulfonates importer (TC 3.A.1.17.2) family. As to quaternary structure, the complex is composed of two ATP-binding proteins (SsuB), two transmembrane proteins (SsuC) and a solute-binding protein (SsuA).

Its subcellular location is the cell inner membrane. The catalysed reaction is ATP + H2O + aliphatic sulfonate-[sulfonate-binding protein]Side 1 = ADP + phosphate + aliphatic sulfonateSide 2 + [sulfonate-binding protein]Side 1.. In terms of biological role, part of the ABC transporter complex SsuABC involved in aliphatic sulfonates import. Responsible for energy coupling to the transport system. This is Aliphatic sulfonates import ATP-binding protein SsuB 1 from Pseudomonas savastanoi pv. phaseolicola (strain 1448A / Race 6) (Pseudomonas syringae pv. phaseolicola (strain 1448A / Race 6)).